Here is a 351-residue protein sequence, read N- to C-terminus: Pleckstrin (351 aa).

A PH 1 domain is found at 4 to 101 (KRIREGYLVK…WVRDTKKAIK (98 aa)). Lys-64 is subject to N6-acetyllysine. Phosphoserine occurs at positions 113 and 117. Positions 136-221 (IEKGIKELNL…NPDAFYYFPD (86 aa)) constitute a DEP domain. The PH 2 domain occupies 244 to 348 (VIIKQGCLLK…WIKAIQVASR (105 aa)).

Its function is as follows. Major protein kinase C substrate of platelets. The polypeptide is Pleckstrin (PLEK) (Canis lupus familiaris (Dog)).